A 274-amino-acid polypeptide reads, in one-letter code: Diaminopimelate epimerase (274 aa).

3 residues coordinate substrate: N11, Q44, and N64. The active-site Proton donor is the C73. Residues 74–75 (GN), N157, N190, and 208–209 (ER) each bind substrate. C217 (proton acceptor) is an active-site residue. Residue 218–219 (GS) coordinates substrate.

It belongs to the diaminopimelate epimerase family. As to quaternary structure, homodimer.

It localises to the cytoplasm. The catalysed reaction is (2S,6S)-2,6-diaminopimelate = meso-2,6-diaminopimelate. It participates in amino-acid biosynthesis; L-lysine biosynthesis via DAP pathway; DL-2,6-diaminopimelate from LL-2,6-diaminopimelate: step 1/1. Its function is as follows. Catalyzes the stereoinversion of LL-2,6-diaminopimelate (L,L-DAP) to meso-diaminopimelate (meso-DAP), a precursor of L-lysine and an essential component of the bacterial peptidoglycan. This is Diaminopimelate epimerase from Haemophilus influenzae (strain PittGG).